We begin with the raw amino-acid sequence, 85 residues long: Arminin 2b (85 aa).

A signal peptide spans Met1–Ala18. Residues Arg19–Ala57 constitute a propeptide that is removed on maturation. Ala82 is modified (alanine amide).

Belongs to the arminin family. As to expression, expressed in entodermal epithelium along the body column.

The protein resides in the secreted. The protein localises to the target cell membrane. Antimicrobial peptide with a broad-spectrum antimicrobial activity. Keeps its antibacterial activity under a wide range of salt concentrations that mimic physiological conditions of human blood, which is surprising, since Hydra is an obligate freshwater animal with nearly no salt tolerance. Does not affect red blood cells. This chain is Arminin 2b, found in Hydra vulgaris (Hydra).